The following is a 561-amino-acid chain: DNA ligase B (561 aa).

Residue Lys-125 is the N6-AMP-lysine intermediate of the active site.

This sequence belongs to the NAD-dependent DNA ligase family. LigB subfamily.

The enzyme catalyses NAD(+) + (deoxyribonucleotide)n-3'-hydroxyl + 5'-phospho-(deoxyribonucleotide)m = (deoxyribonucleotide)n+m + AMP + beta-nicotinamide D-nucleotide.. Catalyzes the formation of phosphodiester linkages between 5'-phosphoryl and 3'-hydroxyl groups in double-stranded DNA using NAD as a coenzyme and as the energy source for the reaction. The sequence is that of DNA ligase B from Salmonella newport (strain SL254).